Reading from the N-terminus, the 72-residue chain is Small ribosomal subunit protein bS20 (72 aa).

The protein belongs to the bacterial ribosomal protein bS20 family.

In terms of biological role, binds directly to 16S ribosomal RNA. In Proteus mirabilis, this protein is Small ribosomal subunit protein bS20 (rpsT).